We begin with the raw amino-acid sequence, 119 residues long: Small ribosomal subunit protein uS13m (119 aa).

Belongs to the universal ribosomal protein uS13 family. Part of the small ribosomal subunit.

It is found in the mitochondrion. Its function is as follows. Located at the top of the head of the small subunit, it contacts several helices of the small subunit rRNA. This Prototheca wickerhamii protein is Small ribosomal subunit protein uS13m (RPS13).